Consider the following 397-residue polypeptide: Purine ribonucleoside efflux pump NepI (397 aa).

Topologically, residues 1–21 are cytoplasmic; it reads MNENIAEKFRADGVARPNWSA. Residues 22–42 form a helical membrane-spanning segment; that stretch reads VFAVAFCVACLITVEFLPVSL. Over 43–54 the chain is Periplasmic; the sequence is LTPMAQDLGISE. Residues 55-75 form a helical membrane-spanning segment; it reads GVAGQSVTVTAFVAMFSSLFI. Over 76–85 the chain is Cytoplasmic; that stretch reads TQIIQATDRR. Residues 86-106 form a helical membrane-spanning segment; the sequence is YIVILFAVLLTASCLMVSFAN. A topological domain (periplasmic) is located at residue Ser-107. Residues 108-128 form a helical membrane-spanning segment; the sequence is FTLLLLGRACLGLALGGFWAM. The Cytoplasmic portion of the chain corresponds to 129–147; the sequence is SASLTMRLVPARTVPKALS. A helical transmembrane segment spans residues 148–168; the sequence is VIFGAVSIALVIAAPLGSFLG. Residues 169-175 are Periplasmic-facing; it reads GIIGWRN. Residues 176 to 196 traverse the membrane as a helical segment; sequence VFNAAAVMGVLCVIWVVKSLP. At 197 to 215 the chain is on the cytoplasmic side; that stretch reads SLPGEPSHQKQNMFSLLQR. The helical transmembrane segment at 216–236 threads the bilayer; that stretch reads PGVMAGMIAIFMSFAGQFAFF. The Periplasmic segment spans residues 237 to 255; that stretch reads TYIRPVYMNLAGFDVDGLT. A helical transmembrane segment spans residues 256–276; the sequence is LVLLSFGIASFVGTSFSSYVL. The Cytoplasmic portion of the chain corresponds to 277 to 281; the sequence is KRSVK. Residues 282–302 form a helical membrane-spanning segment; it reads LALAGAPLLLALSALTLIVWG. Residues 303–305 lie on the Periplasmic side of the membrane; it reads SDK. Residues 306–326 form a helical membrane-spanning segment; that stretch reads TVAAVIAIIWGLAFALVPVGW. The Cytoplasmic portion of the chain corresponds to 327–343; sequence STWITRSLADQAEKAGS. The chain crosses the membrane as a helical span at residues 344 to 364; that stretch reads IQVAVIQLANTCGAAVGGYAL. At 365–366 the chain is on the periplasmic side; the sequence is DN. Residues 367-387 form a helical membrane-spanning segment; it reads FGLLSPLALSGGLMLLTALVV. The Cytoplasmic segment spans residues 388 to 397; sequence AAKVRITPMS.

It belongs to the major facilitator superfamily. DHA1 family. NepI (TC 2.A.1.2.26) subfamily.

It localises to the cell inner membrane. It carries out the reaction inosine(in) + H(+)(out) = inosine(out) + H(+)(in). It catalyses the reaction guanosine(in) + H(+)(out) = guanosine(out) + H(+)(in). In terms of biological role, involved in the efflux of purine ribonucleosides, such as inosine and guanosine. The polypeptide is Purine ribonucleoside efflux pump NepI (Salmonella paratyphi B (strain ATCC BAA-1250 / SPB7)).